The primary structure comprises 518 residues: Chromosomal replication initiator protein DnaA (518 aa).

The tract at residues 1-76 (METDGGDFPS…RALSEAYGSP (76 aa)) is domain I, interacts with DnaA modulators. The interval 76-176 (PIRLAVTVDP…RRPTTRIENS (101 aa)) is domain II. A disordered region spans residues 91–174 (LTPERTGEHS…QPRRPTTRIE (84 aa)). Basic and acidic residues predominate over residues 124 to 135 (DGLHLDERRSGS). Acidic residues predominate over residues 136–147 (LEEDSPLDDSDP). Residues 177–393 (RLNPKYIFET…GALIRVTAFA (217 aa)) form a domain III, AAA+ region region. Residues Gly221, Gly223, Lys224, and Thr225 each coordinate ATP. Residues 394-518 (SLNRQPVDMQ…TNRIKKQSGA (125 aa)) are domain IV, binds dsDNA.

This sequence belongs to the DnaA family. Oligomerizes as a right-handed, spiral filament on DNA at oriC.

It localises to the cytoplasm. In terms of biological role, plays an essential role in the initiation and regulation of chromosomal replication. ATP-DnaA binds to the origin of replication (oriC) to initiate formation of the DNA replication initiation complex once per cell cycle. Binds the DnaA box (a 9 base pair repeat at the origin) and separates the double-stranded (ds)DNA. Forms a right-handed helical filament on oriC DNA; dsDNA binds to the exterior of the filament while single-stranded (ss)DNA is stabiized in the filament's interior. The ATP-DnaA-oriC complex binds and stabilizes one strand of the AT-rich DNA unwinding element (DUE), permitting loading of DNA polymerase. After initiation quickly degrades to an ADP-DnaA complex that is not apt for DNA replication. Binds acidic phospholipids. The sequence is that of Chromosomal replication initiator protein DnaA from Kineococcus radiotolerans (strain ATCC BAA-149 / DSM 14245 / SRS30216).